Here is a 624-residue protein sequence, read N- to C-terminus: Dihydroxy-acid dehydratase (624 aa).

Asp81 is a binding site for Mg(2+). Cys122 provides a ligand contact to [2Fe-2S] cluster. Mg(2+) is bound by residues Asp123 and Lys124. Lys124 bears the N6-carboxylysine mark. Cys195 lines the [2Fe-2S] cluster pocket. Glu499 serves as a coordination point for Mg(2+). Catalysis depends on Ser525, which acts as the Proton acceptor.

This sequence belongs to the IlvD/Edd family. As to quaternary structure, homodimer. [2Fe-2S] cluster serves as cofactor. Requires Mg(2+) as cofactor.

The catalysed reaction is (2R)-2,3-dihydroxy-3-methylbutanoate = 3-methyl-2-oxobutanoate + H2O. It carries out the reaction (2R,3R)-2,3-dihydroxy-3-methylpentanoate = (S)-3-methyl-2-oxopentanoate + H2O. It participates in amino-acid biosynthesis; L-isoleucine biosynthesis; L-isoleucine from 2-oxobutanoate: step 3/4. Its pathway is amino-acid biosynthesis; L-valine biosynthesis; L-valine from pyruvate: step 3/4. Functions in the biosynthesis of branched-chain amino acids. Catalyzes the dehydration of (2R,3R)-2,3-dihydroxy-3-methylpentanoate (2,3-dihydroxy-3-methylvalerate) into 2-oxo-3-methylpentanoate (2-oxo-3-methylvalerate) and of (2R)-2,3-dihydroxy-3-methylbutanoate (2,3-dihydroxyisovalerate) into 2-oxo-3-methylbutanoate (2-oxoisovalerate), the penultimate precursor to L-isoleucine and L-valine, respectively. This is Dihydroxy-acid dehydratase from Shewanella baltica (strain OS185).